We begin with the raw amino-acid sequence, 639 residues long: Serine/threonine-protein kinase PAK mbt (639 aa).

Residues 11–24 form the CRIB domain; the sequence is ISMPSNFEHRVHTG. Residues 25-367 form a linker region; sequence FDKRENKYVG…VVSAGDPREN (343 aa). 2 disordered regions span residues 79–195 and 222–345; these read HHNN…SLLY and RSNL…QDQR. Low complexity-rich tracts occupy residues 91–129, 138–159, 227–241, and 274–295; these read NSSS…ETGG, VARS…ANVP, PPSG…QTSP, and QQQQ…NPLH. The segment covering 296-308 has biased composition (basic residues); sequence PHAHPHPHHHQHL. The span at 309-331 shows a compositional bias: low complexity; that stretch reads AKSASRASSSSGGASSAAQQASG. In terms of domain architecture, Protein kinase spans 368–619; the sequence is LDHFNKIGEG…AAELLAHPFL (252 aa). ATP contacts are provided by residues 374-382 and Lys-397; that span reads IGEGSTGTV. Asp-487 serves as the catalytic Proton acceptor. The residue at position 521 (Ser-521) is a Phosphoserine. Thr-525 is modified (phosphothreonine).

The protein belongs to the protein kinase superfamily. STE Ser/Thr protein kinase family. STE20 subfamily. As to quaternary structure, interacts tightly with GTP-bound but not GDP-bound Cdc42 and weakly with Rac1. Mg(2+) is required as a cofactor. Autophosphorylated when activated by Cdc42. As to expression, expressed in adult brain and eye. High levels detected in developing photoreceptor cells and future bristle cells, and lower levels in cone and pigment cells, as detected in third instar eye imaginal disks (at protein level).

It localises to the cell junction. The protein localises to the adherens junction. The protein resides in the cell membrane. It carries out the reaction L-seryl-[protein] + ATP = O-phospho-L-seryl-[protein] + ADP + H(+). The enzyme catalyses L-threonyl-[protein] + ATP = O-phospho-L-threonyl-[protein] + ADP + H(+). Functionally, involved in neurogenesis of the adult central nervous system, and together with Cdc42, regulates photoreceptor cell morphogenesis. Phosphorylates exogenous substrates when activated by Cdc42. This Drosophila melanogaster (Fruit fly) protein is Serine/threonine-protein kinase PAK mbt.